The sequence spans 124 residues: S-adenosylmethionine decarboxylase proenzyme (124 aa).

Serine 63 acts as the Schiff-base intermediate with substrate; via pyruvic acid in catalysis. Pyruvic acid (Ser); by autocatalysis is present on serine 63. Residue histidine 68 is the Proton acceptor; for processing activity of the active site. The Proton donor; for catalytic activity role is filled by cysteine 83.

Belongs to the prokaryotic AdoMetDC family. Type 1 subfamily. As to quaternary structure, heterotetramer of two alpha and two beta chains arranged as a dimer of alpha/beta heterodimers. Pyruvate serves as cofactor. Is synthesized initially as an inactive proenzyme. Formation of the active enzyme involves a self-maturation process in which the active site pyruvoyl group is generated from an internal serine residue via an autocatalytic post-translational modification. Two non-identical subunits are generated from the proenzyme in this reaction, and the pyruvate is formed at the N-terminus of the alpha chain, which is derived from the carboxyl end of the proenzyme. The post-translation cleavage follows an unusual pathway, termed non-hydrolytic serinolysis, in which the side chain hydroxyl group of the serine supplies its oxygen atom to form the C-terminus of the beta chain, while the remainder of the serine residue undergoes an oxidative deamination to produce ammonia and the pyruvoyl group blocking the N-terminus of the alpha chain.

It carries out the reaction S-adenosyl-L-methionine + H(+) = S-adenosyl 3-(methylsulfanyl)propylamine + CO2. It participates in amine and polyamine biosynthesis; S-adenosylmethioninamine biosynthesis; S-adenosylmethioninamine from S-adenosyl-L-methionine: step 1/1. Functionally, catalyzes the decarboxylation of S-adenosylmethionine to S-adenosylmethioninamine (dcAdoMet), the propylamine donor required for the synthesis of the polyamines spermine and spermidine from the diamine putrescine. This chain is S-adenosylmethionine decarboxylase proenzyme, found in Caldanaerobacter subterraneus subsp. tengcongensis (strain DSM 15242 / JCM 11007 / NBRC 100824 / MB4) (Thermoanaerobacter tengcongensis).